Here is a 222-residue protein sequence, read N- to C-terminus: Protein-L-isoaspartate O-methyltransferase (222 aa).

Residue serine 69 is part of the active site.

This sequence belongs to the methyltransferase superfamily. L-isoaspartyl/D-aspartyl protein methyltransferase family.

The protein localises to the cytoplasm. The enzyme catalyses [protein]-L-isoaspartate + S-adenosyl-L-methionine = [protein]-L-isoaspartate alpha-methyl ester + S-adenosyl-L-homocysteine. In terms of biological role, catalyzes the methyl esterification of L-isoaspartyl residues in peptides and proteins that result from spontaneous decomposition of normal L-aspartyl and L-asparaginyl residues. It plays a role in the repair and/or degradation of damaged proteins. This is Protein-L-isoaspartate O-methyltransferase from Nitrosomonas eutropha (strain DSM 101675 / C91 / Nm57).